The following is a 411-amino-acid chain: Meiotically up-regulated gene 147 protein (411 aa).

Disordered regions lie at residues 1-52, 102-137, and 156-191; these read MLAQ…FENK, EREESGHDEEEADKDASFTGYYNSRNNDEEGSELAD, and HQHEDEFSSSNKDKGFTYEKPVTELPPKRPPYHYES. Residues 33-43 are compositionally biased toward polar residues; that stretch reads TQNESNLQQSE. Residues 156–172 show a composition bias toward basic and acidic residues; sequence HQHEDEFSSSNKDKGFT.

The protein localises to the cytoplasm. It localises to the nucleus. Has a role in meiosis. The protein is Meiotically up-regulated gene 147 protein (mug147) of Schizosaccharomyces pombe (strain 972 / ATCC 24843) (Fission yeast).